The primary structure comprises 375 residues: Ornithine carbamoyltransferase, chloroplastic (375 aa).

Carbamoyl phosphate contacts are provided by residues 123–126 (SMRT), arginine 174, histidine 201, and glutamine 204. L-ornithine-binding residues include asparagine 232, aspartate 293, serine 297, and methionine 298. The Proton acceptor role is filled by cysteine 333. Carbamoyl phosphate is bound by residues 333–334 (CL) and arginine 361.

The protein belongs to the aspartate/ornithine carbamoyltransferase superfamily. OTCase family. In terms of assembly, homotrimer.

Its subcellular location is the plastid. It localises to the chloroplast. The catalysed reaction is carbamoyl phosphate + L-ornithine = L-citrulline + phosphate + H(+). The chain is Ornithine carbamoyltransferase, chloroplastic (ARGF) from Pisum sativum (Garden pea).